The sequence spans 326 residues: Phospho-N-acetylmuramoyl-pentapeptide-transferase (326 aa).

9 helical membrane-spanning segments follow: residues 3–23 (ISISAGIVTFLLTLVGIPAFI), 51–71 (TMGGLVFLITSVLVAFFFALF), 79–99 (VGMILFILVLYGLVGFLDDFL), 115–135 (LALQLLGGVIFYLFYERGGDI), 138–158 (VFGYPVHLGFFYIFFALFWLV), 169–189 (GVDGLASISVVISLFAYGVIA), 195–215 (MDILLVILAMIGGLLGFFIFN), 221–243 (VFMGDVGSLALGGMLAAISMALH), and 306–326 (FFFWGVGLLASLLTLAILYLM).

Belongs to the glycosyltransferase 4 family. MraY subfamily. It depends on Mg(2+) as a cofactor.

The protein localises to the cell membrane. The catalysed reaction is UDP-N-acetyl-alpha-D-muramoyl-L-alanyl-gamma-D-glutamyl-L-lysyl-D-alanyl-D-alanine + di-trans,octa-cis-undecaprenyl phosphate = Mur2Ac(oyl-L-Ala-gamma-D-Glu-L-Lys-D-Ala-D-Ala)-di-trans,octa-cis-undecaprenyl diphosphate + UMP. Its pathway is cell wall biogenesis; peptidoglycan biosynthesis. In terms of biological role, catalyzes the initial step of the lipid cycle reactions in the biosynthesis of the cell wall peptidoglycan: transfers peptidoglycan precursor phospho-MurNAc-pentapeptide from UDP-MurNAc-pentapeptide onto the lipid carrier undecaprenyl phosphate, yielding undecaprenyl-pyrophosphoryl-MurNAc-pentapeptide, known as lipid I. In Streptococcus pneumoniae serotype 2 (strain D39 / NCTC 7466), this protein is Phospho-N-acetylmuramoyl-pentapeptide-transferase.